A 573-amino-acid polypeptide reads, in one-letter code: Isocitrate dehydrogenase kinase/phosphatase (573 aa).

ATP is bound by residues 317–323 and lysine 338; that span reads APGVRGM. Aspartate 373 is a catalytic residue.

It belongs to the AceK family.

It is found in the cytoplasm. It catalyses the reaction L-seryl-[isocitrate dehydrogenase] + ATP = O-phospho-L-seryl-[isocitrate dehydrogenase] + ADP + H(+). Bifunctional enzyme which can phosphorylate or dephosphorylate isocitrate dehydrogenase (IDH) on a specific serine residue. This is a regulatory mechanism which enables bacteria to bypass the Krebs cycle via the glyoxylate shunt in response to the source of carbon. When bacteria are grown on glucose, IDH is fully active and unphosphorylated, but when grown on acetate or ethanol, the activity of IDH declines drastically concomitant with its phosphorylation. In Pseudomonas fluorescens (strain ATCC BAA-477 / NRRL B-23932 / Pf-5), this protein is Isocitrate dehydrogenase kinase/phosphatase.